Reading from the N-terminus, the 215-residue chain is AN1-type zinc finger protein C1271.05c (215 aa).

Residues 116-128 (IPSISKSNLTNPP) are compositionally biased toward polar residues. Residues 116–138 (IPSISKSNLTNPPLESEKSSDKA) are disordered. The segment at 144-193 (ATSRRRCCHPTCTRITLRLAGNCLHCNGRFCAAHRLMEDHDCVALFSLRK) adopts an AN1-type zinc-finger fold. The Zn(2+) site is built by Cys150, Cys155, Cys166, Cys169, Cys174, His177, His183, and Cys185.

The protein localises to the cytoplasm. It localises to the nucleus. This chain is AN1-type zinc finger protein C1271.05c, found in Schizosaccharomyces pombe (strain 972 / ATCC 24843) (Fission yeast).